Reading from the N-terminus, the 350-residue chain is Biotin synthase (350 aa).

The 225-residue stretch at 54–278 (REIQLSTLLS…TMPQSYVRLS (225 aa)) folds into the Radical SAM core domain. [4Fe-4S] cluster is bound by residues Cys-69, Cys-73, and Cys-76. [2Fe-2S] cluster-binding residues include Cys-113, Cys-144, Cys-204, and Arg-276.

Belongs to the radical SAM superfamily. Biotin synthase family. As to quaternary structure, homodimer. Requires [4Fe-4S] cluster as cofactor. [2Fe-2S] cluster is required as a cofactor.

The catalysed reaction is (4R,5S)-dethiobiotin + (sulfur carrier)-SH + 2 reduced [2Fe-2S]-[ferredoxin] + 2 S-adenosyl-L-methionine = (sulfur carrier)-H + biotin + 2 5'-deoxyadenosine + 2 L-methionine + 2 oxidized [2Fe-2S]-[ferredoxin]. It participates in cofactor biosynthesis; biotin biosynthesis; biotin from 7,8-diaminononanoate: step 2/2. Catalyzes the conversion of dethiobiotin (DTB) to biotin by the insertion of a sulfur atom into dethiobiotin via a radical-based mechanism. The polypeptide is Biotin synthase (Neisseria meningitidis serogroup A / serotype 4A (strain DSM 15465 / Z2491)).